Consider the following 202-residue polypeptide: FMN-dependent NADH:quinone oxidoreductase (202 aa).

Residues S9, 15-17 (SVS), 95-98 (MYNF), and 139-142 (SRGG) contribute to the FMN site.

Belongs to the azoreductase type 1 family. In terms of assembly, homodimer. FMN serves as cofactor.

It catalyses the reaction 2 a quinone + NADH + H(+) = 2 a 1,4-benzosemiquinone + NAD(+). It carries out the reaction N,N-dimethyl-1,4-phenylenediamine + anthranilate + 2 NAD(+) = 2-(4-dimethylaminophenyl)diazenylbenzoate + 2 NADH + 2 H(+). Quinone reductase that provides resistance to thiol-specific stress caused by electrophilic quinones. In terms of biological role, also exhibits azoreductase activity. Catalyzes the reductive cleavage of the azo bond in aromatic azo compounds to the corresponding amines. This is FMN-dependent NADH:quinone oxidoreductase from Laribacter hongkongensis (strain HLHK9).